A 140-amino-acid chain; its full sequence is Holo-[acyl-carrier-protein] synthase (140 aa).

Mg(2+) is bound by residues Asp-9 and Glu-63.

The protein belongs to the P-Pant transferase superfamily. AcpS family. The cofactor is Mg(2+).

The protein resides in the cytoplasm. The catalysed reaction is apo-[ACP] + CoA = holo-[ACP] + adenosine 3',5'-bisphosphate + H(+). Functionally, transfers the 4'-phosphopantetheine moiety from coenzyme A to a Ser of acyl-carrier-protein. This Paraburkholderia phytofirmans (strain DSM 17436 / LMG 22146 / PsJN) (Burkholderia phytofirmans) protein is Holo-[acyl-carrier-protein] synthase.